We begin with the raw amino-acid sequence, 203 residues long: MAWSITNKADTSSFTKMAEIRAHLKNSAENKDKNEDIFPEDVIIPSTKPKTKRATTPRKPAATKRSTKKEEVEEEVVIEEYHQTTEKNSPSPGVSDIVESVAAVELDDSDGDDEPMVQVEAGKVNHSARSDLSDLKVATDNIVKDLKKIITRISAVSTVLEDVQAAGISRQFTSMTKAITTLSDLVTEGKSKVVRKKVKTCKK.

The span at 25-36 (KNSAENKDKNED) shows a compositional bias: basic and acidic residues. Positions 25 to 100 (KNSAENKDKN…SPGVSDIVES (76 aa)) are disordered. A compositionally biased stretch (basic residues) spans 49 to 67 (PKTKRATTPRKPAATKRST). Thr84 and Thr85 each carry phosphothreonine.

This sequence belongs to the orthopoxvirus OPG110 family. Interacts with the DNA polymerase processivity factor A20. Interacts with B1R kinase. Interacts with the late transcription factors VLTF-1 and VLTF-3. Interacts with the late transcription elongation factor G2. Interacts with itself. Might be part of a transcription complex composed at least of G2, A18, and H5. In terms of processing, phosphorylated at multiple sites. Phosphorylation is necessary for cleavage activity. Phosphorylated by the viral B1R and F10 kinases.

It is found in the virion. The protein resides in the host cytoplasm. Functionally, involved in the co-transcriptional or post-transcriptional endoribonucleolytic cleavage that generates sequence-homogeneous 3' ends during late transcription. Involved in postreplicative transcription elongation on intermediate and late genes. Also involved in DNA replication and in multiple steps of virion morphogenesis. Required both for inclusion of virosoplasm into crescents as well as for maturation of immature virions (IV) into mature virions (MV). This Bos taurus (Bovine) protein is Late transcription elongation factor OPG110 (OPG110).